A 426-amino-acid chain; its full sequence is Glutamate-1-semialdehyde 2,1-aminomutase (426 aa).

Lys265 is subject to N6-(pyridoxal phosphate)lysine.

The protein belongs to the class-III pyridoxal-phosphate-dependent aminotransferase family. HemL subfamily. As to quaternary structure, homodimer. Requires pyridoxal 5'-phosphate as cofactor.

The protein localises to the cytoplasm. It catalyses the reaction (S)-4-amino-5-oxopentanoate = 5-aminolevulinate. It functions in the pathway porphyrin-containing compound metabolism; protoporphyrin-IX biosynthesis; 5-aminolevulinate from L-glutamyl-tRNA(Glu): step 2/2. This chain is Glutamate-1-semialdehyde 2,1-aminomutase, found in Shigella flexneri serotype 5b (strain 8401).